We begin with the raw amino-acid sequence, 128 residues long: Phosphoribosyl-AMP cyclohydrolase (128 aa).

Aspartate 79 contacts Mg(2+). Cysteine 80 serves as a coordination point for Zn(2+). The Mg(2+) site is built by aspartate 81 and aspartate 83. Zn(2+)-binding residues include cysteine 97 and cysteine 104.

The protein belongs to the PRA-CH family. As to quaternary structure, homodimer. Mg(2+) is required as a cofactor. Requires Zn(2+) as cofactor.

The protein localises to the cytoplasm. The enzyme catalyses 1-(5-phospho-beta-D-ribosyl)-5'-AMP + H2O = 1-(5-phospho-beta-D-ribosyl)-5-[(5-phospho-beta-D-ribosylamino)methylideneamino]imidazole-4-carboxamide. It functions in the pathway amino-acid biosynthesis; L-histidine biosynthesis; L-histidine from 5-phospho-alpha-D-ribose 1-diphosphate: step 3/9. Its function is as follows. Catalyzes the hydrolysis of the adenine ring of phosphoribosyl-AMP. This Saccharophagus degradans (strain 2-40 / ATCC 43961 / DSM 17024) protein is Phosphoribosyl-AMP cyclohydrolase.